The chain runs to 604 residues: Ectonucleoside triphosphate diphosphohydrolase 7 (604 aa).

The Cytoplasmic segment spans residues 1-28; it reads MARISFSYLCPASWYFTVPTVSPFLRQR. The helical transmembrane segment at 29–49 threads the bilayer; it reads VAFLGLFFISCLLLLMLIIDF. The Vesicular segment spans residues 50–546; sequence RHWSASLPRD…QAHGSWFRLS (497 aa). Residue E217 is the Proton acceptor of the active site. Residue N330 is glycosylated (N-linked (GlcNAc...) asparagine). The cysteines at positions 448 and 477 are disulfide-linked. The chain crosses the membrane as a helical span at residues 547 to 567; the sequence is FVYNHYLFFACILVVLLAIFL. Residues 568–604 are Cytoplasmic-facing; that stretch reads YLLRLRRIHHRQTRASAPLDLLWLEEVVPMMGVQVGP.

It belongs to the GDA1/CD39 NTPase family. Requires Ca(2+) as cofactor. Mg(2+) is required as a cofactor.

It localises to the cytoplasmic vesicle membrane. It catalyses the reaction a ribonucleoside 5'-triphosphate + H2O = a ribonucleoside 5'-diphosphate + phosphate + H(+). It carries out the reaction UTP + H2O = UDP + phosphate + H(+). The catalysed reaction is GTP + H2O = GDP + phosphate + H(+). The enzyme catalyses CTP + H2O = CDP + phosphate + H(+). Catalyzes the hydrolysis of nucleoside triphosphates and diphosphates in a calcium- or magnesium-dependent manner. Preferentially hydrolyzes nucleoside 5'-triphosphates, with substrate preference for UTP &gt; GTP &gt; CTP. Hydrolyzes ATP and nucleoside diphosphates only to a minor extent. This chain is Ectonucleoside triphosphate diphosphohydrolase 7 (ENTPD7), found in Homo sapiens (Human).